The following is a 170-amino-acid chain: Mitochondrial fission 1 protein A (170 aa).

The stretch at 90 to 123 (REKLYLLAVGYYRSGNYSRSRQLVDRCIEMQADW) is one TPR repeat. The chain crosses the membrane as a helical span at residues 142–162 (VIGIGITATAFGAVGLIAGGI).

The protein belongs to the FIS1 family. Interacts with ARC5.

The protein localises to the mitochondrion outer membrane. Its subcellular location is the peroxisome membrane. Its function is as follows. Component of the peroxisomal and mitochondrial division machineries. Plays a role in promoting the fission of mitochondria and peroxisomes. This is Mitochondrial fission 1 protein A (FIS1A) from Arabidopsis thaliana (Mouse-ear cress).